A 92-amino-acid chain; its full sequence is Large ribosomal subunit protein eL43 (92 aa).

Zn(2+)-binding residues include cysteine 39, cysteine 42, cysteine 57, and cysteine 60. The segment at cysteine 39–cysteine 60 adopts a C4-type zinc-finger fold.

It belongs to the eukaryotic ribosomal protein eL43 family. As to quaternary structure, component of the large ribosomal subunit.

The protein resides in the cytoplasm. Functionally, component of the large ribosomal subunit. The ribosome is a large ribonucleoprotein complex responsible for the synthesis of proteins in the cell. This chain is Large ribosomal subunit protein eL43 (Rpl37a), found in Mus musculus (Mouse).